Here is a 131-residue protein sequence, read N- to C-terminus: Small ribosomal subunit protein uS12 (131 aa).

The interval 1–22 (MPTTQQLLRKGRKVLQKKSKVP) is disordered. Positions 9-20 (RKGRKVLQKKSK) are enriched in basic residues. D89 is subject to 3-methylthioaspartic acid. A disordered region spans residues 102-131 (LDTQGVKDRNKSRSKYGTKKPKAGAAAAKK). Basic residues predominate over residues 113 to 131 (SRSKYGTKKPKAGAAAAKK).

It belongs to the universal ribosomal protein uS12 family. As to quaternary structure, part of the 30S ribosomal subunit. Contacts proteins S8 and S17. May interact with IF1 in the 30S initiation complex.

In terms of biological role, with S4 and S5 plays an important role in translational accuracy. Interacts with and stabilizes bases of the 16S rRNA that are involved in tRNA selection in the A site and with the mRNA backbone. Located at the interface of the 30S and 50S subunits, it traverses the body of the 30S subunit contacting proteins on the other side and probably holding the rRNA structure together. The combined cluster of proteins S8, S12 and S17 appears to hold together the shoulder and platform of the 30S subunit. In Deinococcus radiodurans (strain ATCC 13939 / DSM 20539 / JCM 16871 / CCUG 27074 / LMG 4051 / NBRC 15346 / NCIMB 9279 / VKM B-1422 / R1), this protein is Small ribosomal subunit protein uS12.